We begin with the raw amino-acid sequence, 421 residues long: Serine--tRNA ligase (421 aa).

229–231 (TAE) is a binding site for L-serine. Position 260 to 262 (260 to 262 (RSE)) interacts with ATP. Residue Glu-283 participates in L-serine binding. Residue 347–350 (EISS) participates in ATP binding. L-serine is bound at residue Ser-382.

This sequence belongs to the class-II aminoacyl-tRNA synthetase family. Type-1 seryl-tRNA synthetase subfamily. Homodimer. The tRNA molecule binds across the dimer.

It localises to the cytoplasm. It catalyses the reaction tRNA(Ser) + L-serine + ATP = L-seryl-tRNA(Ser) + AMP + diphosphate + H(+). The catalysed reaction is tRNA(Sec) + L-serine + ATP = L-seryl-tRNA(Sec) + AMP + diphosphate + H(+). It functions in the pathway aminoacyl-tRNA biosynthesis; selenocysteinyl-tRNA(Sec) biosynthesis; L-seryl-tRNA(Sec) from L-serine and tRNA(Sec): step 1/1. Its function is as follows. Catalyzes the attachment of serine to tRNA(Ser). Is also able to aminoacylate tRNA(Sec) with serine, to form the misacylated tRNA L-seryl-tRNA(Sec), which will be further converted into selenocysteinyl-tRNA(Sec). The polypeptide is Serine--tRNA ligase (Symbiobacterium thermophilum (strain DSM 24528 / JCM 14929 / IAM 14863 / T)).